We begin with the raw amino-acid sequence, 500 residues long: NAD(P)H-quinone oxidoreductase chain 4, chloroplastic (500 aa).

The next 14 helical transmembrane spans lie at 4–24 (FPWL…ILFL), 37–57 (LCIC…HFQL), 84–104 (GISI…TLAA), 111–129 (SRVF…IGPF), 134–154 (LLLF…LLSM), 167–187 (FILY…GICL), 208–228 (ALEM…SPII), 242–262 (HYST…YGLV), 272–292 (AHSI…IYAA), 305–325 (IAYS…SIND), 330–350 (GAIL…FLAG), 386–406 (LALP…GILT), 416–436 (ILIT…SLSM), and 462–482 (FFVS…PDFV).

This sequence belongs to the complex I subunit 4 family.

The protein localises to the plastid. The protein resides in the chloroplast thylakoid membrane. It carries out the reaction a plastoquinone + NADH + (n+1) H(+)(in) = a plastoquinol + NAD(+) + n H(+)(out). The enzyme catalyses a plastoquinone + NADPH + (n+1) H(+)(in) = a plastoquinol + NADP(+) + n H(+)(out). The polypeptide is NAD(P)H-quinone oxidoreductase chain 4, chloroplastic (Morus indica (Mulberry)).